Reading from the N-terminus, the 436-residue chain is GTPase Obg (436 aa).

Positions 2-160 (SMFLDTAKIK…RELQLELKIL (159 aa)) constitute an Obg domain. The OBG-type G domain maps to 161-338 (ADVGLVGFPS…LLDATAELLD (178 aa)). GTP contacts are provided by residues 167–174 (GFPSVGKS), 192–196 (FTTIV), 214–217 (DLPG), 284–287 (NKMD), and 319–321 (SGL). Positions 174 and 194 each coordinate Mg(2+). The OCT domain occupies 358-436 (GFDEEEKAFE…IGKFEFEFVD (79 aa)).

This sequence belongs to the TRAFAC class OBG-HflX-like GTPase superfamily. OBG GTPase family. Monomer. Requires Mg(2+) as cofactor.

The protein resides in the cytoplasm. In terms of biological role, an essential GTPase which binds GTP, GDP and possibly (p)ppGpp with moderate affinity, with high nucleotide exchange rates and a fairly low GTP hydrolysis rate. Plays a role in control of the cell cycle, stress response, ribosome biogenesis and in those bacteria that undergo differentiation, in morphogenesis control. In Streptococcus pneumoniae serotype 2 (strain D39 / NCTC 7466), this protein is GTPase Obg.